Reading from the N-terminus, the 504-residue chain is MEFSTQTTASLHLIKTSALAVGVYADGVLSPAAEQIDHASNGAIRAVTKTEFRGRAGATLVLRNLAGISAQRVVLVGLGKQEEYSVRAHSGAEQAFAAYLVAAQLTEGVSTLAALPIENSTMRDRARAAAIAAGQATYHYDATFGKPDREALPKLKKITQIIERAEAAQTQQGLREGAAIANGMALTRTLGNLPGNICTPTYLGETARKLAREFKTLIKVEVLDRKQVEALGMGSFVSVARGSAEPLRFVVLRYNGKPATARRTRGAAGPVVLVGKGITFDAGGISIKPAATMDEMKYDMCGAASVLGTFRALAELAPALEVVGLIAACENLPSGTANKPGDVVTSMSGQTIEILNTDAEGRLVLCDALTYAERFKPSAVIDIATLTGACVVALGGVNTGLFSKDDALASALLEAGRQTQDPAWRMPLDDAYQEQLRSNFADIANIGGPQAGAVTAACFLSRFTQAYPWAHLDIAGTAWRGGKDKGATGRPVPLLMQYLLNQAA.

Residues lysine 276 and aspartate 281 each contribute to the Mn(2+) site. Lysine 288 is a catalytic residue. 3 residues coordinate Mn(2+): aspartate 299, aspartate 358, and glutamate 360. Arginine 362 is an active-site residue.

The protein belongs to the peptidase M17 family. Mn(2+) is required as a cofactor.

Its subcellular location is the cytoplasm. It carries out the reaction Release of an N-terminal amino acid, Xaa-|-Yaa-, in which Xaa is preferably Leu, but may be other amino acids including Pro although not Arg or Lys, and Yaa may be Pro. Amino acid amides and methyl esters are also readily hydrolyzed, but rates on arylamides are exceedingly low.. The enzyme catalyses Release of an N-terminal amino acid, preferentially leucine, but not glutamic or aspartic acids.. Its function is as follows. Presumably involved in the processing and regular turnover of intracellular proteins. Catalyzes the removal of unsubstituted N-terminal amino acids from various peptides. This Bordetella avium (strain 197N) protein is Probable cytosol aminopeptidase.